Consider the following 154-residue polypeptide: Myoglobin (154 aa).

The region spanning 2–148 (GLSDGEWQSV…FRNDIAAKYK (147 aa)) is the Globin domain. A Phosphoserine modification is found at serine 4. Residue histidine 65 participates in nitrite binding. Histidine 65 contacts O2. The residue at position 68 (threonine 68) is a Phosphothreonine. Histidine 94 provides a ligand contact to heme b.

This sequence belongs to the globin family. In terms of assembly, monomeric.

It is found in the cytoplasm. Its subcellular location is the sarcoplasm. It catalyses the reaction Fe(III)-heme b-[protein] + nitric oxide + H2O = Fe(II)-heme b-[protein] + nitrite + 2 H(+). The enzyme catalyses H2O2 + AH2 = A + 2 H2O. Monomeric heme protein which primary function is to store oxygen and facilitate its diffusion within muscle tissues. Reversibly binds oxygen through a pentacoordinated heme iron and enables its timely and efficient release as needed during periods of heightened demand. Depending on the oxidative conditions of tissues and cells, and in addition to its ability to bind oxygen, it also has a nitrite reductase activity whereby it regulates the production of bioactive nitric oxide. Under stress conditions, like hypoxia and anoxia, it also protects cells against reactive oxygen species thanks to its pseudoperoxidase activity. The protein is Myoglobin (MB) of Nycticebus coucang (Slow loris).